The sequence spans 161 residues: Cytochrome c-type biogenesis protein CcmE (161 aa).

Residues 1–8 are Cytoplasmic-facing; that stretch reads MNPVRKKR. Residues 9–29 traverse the membrane as a helical; Signal-anchor for type II membrane protein segment; that stretch reads LYIVLAILCGVSIAVALALTA. Residues 30–161 lie on the Periplasmic side of the membrane; the sequence is LQENINLFYT…AKGYQQESAQ (132 aa). Histidine 124 and tyrosine 128 together coordinate heme.

The protein belongs to the CcmE/CycJ family.

It is found in the cell inner membrane. Its function is as follows. Heme chaperone required for the biogenesis of c-type cytochromes. Transiently binds heme delivered by CcmC and transfers the heme to apo-cytochromes in a process facilitated by CcmF and CcmH. This Ectopseudomonas mendocina (strain ymp) (Pseudomonas mendocina) protein is Cytochrome c-type biogenesis protein CcmE.